An 823-amino-acid polypeptide reads, in one-letter code: Trimethylamine-N-oxide reductase (823 aa).

Residues methionine 1–alanine 32 constitute a signal peptide (tat-type signal). Residue serine 181 coordinates Mo-bis(molybdopterin guanine dinucleotide).

This sequence belongs to the prokaryotic molybdopterin-containing oxidoreductase family. Requires Mo-bis(molybdopterin guanine dinucleotide) as cofactor. In terms of processing, predicted to be exported by the Tat system. The position of the signal peptide cleavage has not been experimentally proven.

The protein localises to the periplasm. It carries out the reaction trimethylamine + 2 Fe(III)-[cytochrome c] + H2O = trimethylamine N-oxide + 2 Fe(II)-[cytochrome c] + 3 H(+). Its function is as follows. Reduces trimethylamine-N-oxide (TMAO) into trimethylamine; an anaerobic reaction coupled to energy-yielding reactions. In Pasteurella multocida (strain Pm70), this protein is Trimethylamine-N-oxide reductase (torA).